Consider the following 149-residue polypeptide: Large ribosomal subunit protein uL13 (149 aa).

Belongs to the universal ribosomal protein uL13 family. Part of the 50S ribosomal subunit.

Its function is as follows. This protein is one of the early assembly proteins of the 50S ribosomal subunit, although it is not seen to bind rRNA by itself. It is important during the early stages of 50S assembly. The chain is Large ribosomal subunit protein uL13 from Chlorobium phaeobacteroides (strain DSM 266 / SMG 266 / 2430).